The following is a 192-amino-acid chain: Probable cobalt-precorrin-6B C(15)-methyltransferase (decarboxylating) (192 aa).

Residues Thr17, 41-45 (GCGTG), Asp62, and Ala91 each bind S-adenosyl-L-methionine.

It belongs to the methyltransferase superfamily. Archaeal-type CbiT family. As to quaternary structure, homotetramer.

It carries out the reaction Co-precorrin-6B + S-adenosyl-L-methionine = Co-precorrin-7 + S-adenosyl-L-homocysteine + CO2. It functions in the pathway cofactor biosynthesis; adenosylcobalamin biosynthesis; cob(II)yrinate a,c-diamide from sirohydrochlorin (anaerobic route): step 8/10. In terms of biological role, catalyzes the methylation of C-15 in cobalt-precorrin-6B followed by the decarboxylation of C-12 to form cobalt-precorrin-7. The chain is Probable cobalt-precorrin-6B C(15)-methyltransferase (decarboxylating) from Methanothermobacter thermautotrophicus (strain ATCC 29096 / DSM 1053 / JCM 10044 / NBRC 100330 / Delta H) (Methanobacterium thermoautotrophicum).